We begin with the raw amino-acid sequence, 222 residues long: 3-dehydroquinate dehydratase (222 aa).

3-dehydroquinate contacts are provided by residues 32 to 34 (ELR) and arginine 64. Histidine 117 serves as the catalytic Proton donor/acceptor. The active-site Schiff-base intermediate with substrate is lysine 143. Arginine 181 contacts 3-dehydroquinate.

This sequence belongs to the type-I 3-dehydroquinase family. As to quaternary structure, homodimer.

The enzyme catalyses 3-dehydroquinate = 3-dehydroshikimate + H2O. It functions in the pathway metabolic intermediate biosynthesis; chorismate biosynthesis; chorismate from D-erythrose 4-phosphate and phosphoenolpyruvate: step 3/7. Involved in the third step of the chorismate pathway, which leads to the biosynthesis of aromatic amino acids. Catalyzes the cis-dehydration of 3-dehydroquinate (DHQ) and introduces the first double bond of the aromatic ring to yield 3-dehydroshikimate. The protein is 3-dehydroquinate dehydratase of Aeropyrum pernix (strain ATCC 700893 / DSM 11879 / JCM 9820 / NBRC 100138 / K1).